A 202-amino-acid polypeptide reads, in one-letter code: LexA repressor (202 aa).

A DNA-binding region (H-T-H motif) is located at residues 28-48 (IAEIARAIGVSSPHGVREQLR). Residues Ser120 and Lys157 each act as for autocatalytic cleavage activity in the active site.

This sequence belongs to the peptidase S24 family. As to quaternary structure, homodimer.

The enzyme catalyses Hydrolysis of Ala-|-Gly bond in repressor LexA.. In terms of biological role, represses a number of genes involved in the response to DNA damage (SOS response), including recA and lexA. In the presence of single-stranded DNA, RecA interacts with LexA causing an autocatalytic cleavage which disrupts the DNA-binding part of LexA, leading to derepression of the SOS regulon and eventually DNA repair. The sequence is that of LexA repressor from Methylococcus capsulatus (strain ATCC 33009 / NCIMB 11132 / Bath).